A 481-amino-acid chain; its full sequence is tRNA pseudouridine(38/39) synthase (481 aa).

Ala-2 carries the post-translational modification N-acetylalanine. The Nucleophile role is filled by Asp-119. Residue Tyr-196 participates in substrate binding.

It belongs to the tRNA pseudouridine synthase TruA family.

It localises to the nucleus. It carries out the reaction uridine(38/39) in tRNA = pseudouridine(38/39) in tRNA. Functionally, formation of pseudouridine at position 39 in the anticodon stem and loop of transfer RNAs. Also acts on position 38, but much less efficiently. The sequence is that of tRNA pseudouridine(38/39) synthase (Pus3) from Mus musculus (Mouse).